Here is a 1292-residue protein sequence, read N- to C-terminus: Kinesin-like protein KIN-12A (1292 aa).

A disordered region spans residues 1–86 (MKKHFTLPRN…LSAETATESG (86 aa)). The span at 19–29 (PHSPNPSISKS) shows a compositional bias: low complexity. Over residues 62–71 (PLPPRPPPSN) the composition is skewed to pro residues. Residues 91 to 426 (GVKVIVRMKP…LRFAQRAKAI (336 aa)) enclose the Kinesin motor domain. Residue 165-172 (GQTGSGKT) coordinates ATP. Microtubules-binding regions lie at residues 293–297 (SSRSH), 326–332 (VDLAGSE), and 375–379 (HIPYR). The segment at 424 to 461 (KAIQNKAVVNEVMQDDVNFLRGVIHQLRDELQRMKNDG) is neck. A disordered region spans residues 677-724 (SVSPTIRNSRKSLKTSELSTASQKDSEGENLVTEAADPSPATSKKMNN). Coiled coils occupy residues 945-992 (EVLK…CYID) and 1047-1232 (SEEL…NQLV).

Belongs to the TRAFAC class myosin-kinesin ATPase superfamily. Kinesin family. KIN-12 subfamily. Homodimer and heterodimer with KIN12B. Interacts with TIO.

It localises to the cytoplasm. The protein resides in the cytoskeleton. It is found in the phragmoplast. Its function is as follows. Plus-end directed kinesin-like motor enzyme that plays a critical role in the organization of phragmoplast microtubules during cytokinesis. Constitutes a signaling module in association with serine/threonine-protein kinase TIO that is required to support phragmoplast expansion and cell-plate growth in plant cells. Binds microtubules in an ATP-sensitive manner. This is Kinesin-like protein KIN-12A from Arabidopsis thaliana (Mouse-ear cress).